Here is a 129-residue protein sequence, read N- to C-terminus: MARKTNTRKKRVKKNIETGVAHIRSTFNNTIVTLTDTHGNAISWSSAGALGFRGSRKSTPFAAQMAAETAAKAAMEHGLKSLEVTVKGPGAGREAAIRALQAAGLEVTAIRDVTPVPHNGCRPPKRRRV.

It belongs to the universal ribosomal protein uS11 family. As to quaternary structure, part of the 30S ribosomal subunit. Interacts with proteins S7 and S18. Binds to IF-3.

Functionally, located on the platform of the 30S subunit, it bridges several disparate RNA helices of the 16S rRNA. Forms part of the Shine-Dalgarno cleft in the 70S ribosome. The polypeptide is Small ribosomal subunit protein uS11 (Bacillus cytotoxicus (strain DSM 22905 / CIP 110041 / 391-98 / NVH 391-98)).